The chain runs to 246 residues: MEAKISVPKYELRGFSLWGFRDMAQCMDFLFDGGRVKRGTLVAMNAEKILTAEQDTELHALLDEAEYKYADGISMVRSIRRKYPGADVSRVAGADLWEALMQRAGREGTPVFLIGGKPSVLAETEQKLRSQWNVNLVGSQDGYFKPEQREPLFERIRASGAAIVTVAMGSPKQEILMRDCRKVHPQALYMGVGGTYDVFTGHVKRAPKVWQNLGLEWLYRLLSQPSRLGRQLRLLKFVSYYYRGKM.

This sequence belongs to the glycosyltransferase 26 family.

The catalysed reaction is UDP-N-acetyl-alpha-D-mannosaminouronate + N-acetyl-alpha-D-glucosaminyl-di-trans,octa-cis-undecaprenyl diphosphate = beta-D-ManNAcA-(1-&gt;4)-alpha-D-GlcNAc-di-trans,octa-cis-undecaprenyl diphosphate + UDP + H(+). The protein operates within bacterial outer membrane biogenesis; enterobacterial common antigen biosynthesis. Its function is as follows. Catalyzes the synthesis of Und-PP-GlcNAc-ManNAcA (Lipid II), the second lipid-linked intermediate involved in enterobacterial common antigen (ECA) synthesis. The protein is UDP-N-acetyl-D-mannosaminuronic acid transferase of Serratia proteamaculans (strain 568).